Consider the following 746-residue polypeptide: Probable ubiquitin carboxyl-terminal hydrolase MINDY-4 (746 aa).

3 disordered regions span residues 123 to 179 (DDET…SEGE), 198 to 254 (MALG…IKGE), and 319 to 342 (GKGA…FSNM). Polar residues-rich tracts occupy residues 141 to 152 (YRSQNDLQFNKS) and 165 to 174 (TEAGVTSTGV). Cys448 acts as the Nucleophile in catalysis. His666 functions as the Proton acceptor in the catalytic mechanism.

This sequence belongs to the MINDY deubiquitinase family. FAM188 subfamily.

It catalyses the reaction Thiol-dependent hydrolysis of ester, thioester, amide, peptide and isopeptide bonds formed by the C-terminal Gly of ubiquitin (a 76-residue protein attached to proteins as an intracellular targeting signal).. In terms of biological role, probable hydrolase that can remove 'Lys-48'-linked conjugated ubiquitin from proteins. The sequence is that of Probable ubiquitin carboxyl-terminal hydrolase MINDY-4 (mindy4) from Xenopus tropicalis (Western clawed frog).